Consider the following 251-residue polypeptide: MNAKIIDISGNPVGEIVLPAIFDEEYRPDLIKRAVLAAQANRLQPYGPHFYAGMNTSARSWGPGHGVSRVPRIVTGRRAAAVPMARGGRASHPPVPSKVLSEKINEKERIKAIRSAVAATAKPDIVAARGHLFSGELPIVVRGEIESISKTSELRRFLMAAGLWDDVMRAKNGRKVRAGKGKIRGRRFRQPRSILIVAAADNGIGRAARNLPGVDFVTADRLNAELLAPGTHAGRLTVWSEPSLKVLEERL.

It belongs to the universal ribosomal protein uL4 family. As to quaternary structure, part of the 50S ribosomal subunit.

Functionally, one of the primary rRNA binding proteins, this protein initially binds near the 5'-end of the 23S rRNA. It is important during the early stages of 50S assembly. It makes multiple contacts with different domains of the 23S rRNA in the assembled 50S subunit and ribosome. Its function is as follows. Forms part of the polypeptide exit tunnel. The polypeptide is Large ribosomal subunit protein uL4 (Methanothrix thermoacetophila (strain DSM 6194 / JCM 14653 / NBRC 101360 / PT) (Methanosaeta thermophila)).